Here is a 437-residue protein sequence, read N- to C-terminus: Putrescine hydroxycinnamoyltransferase 3 (437 aa).

Residues histidine 151 and aspartate 383 each act as proton acceptor in the active site.

Belongs to the plant acyltransferase family. As to expression, highly expressed in roots. Expressed at low levels in shoots and flowers.

Its function is as follows. Hydroxycinnamoyl transferase that catalyzes the transfer of an acyl from p-coumaryol-CoA to putrescine, to produce coumaroyl putrescine. Can use feruloyl-CoA and caffeoyl-CoA as acyl donors. This chain is Putrescine hydroxycinnamoyltransferase 3, found in Oryza sativa subsp. japonica (Rice).